A 683-amino-acid chain; its full sequence is Cysteine-rich receptor-like protein kinase 28 (683 aa).

The first 24 residues, 1 to 24 (MEHVRVIFFFFACVLKIVPFICLA), serve as a signal peptide directing secretion. Residues 25–288 (QKDKYEFPPG…RTGKGKGGSK (264 aa)) are Extracellular-facing. Gnk2-homologous domains lie at 32 to 136 (PPGF…NMII) and 142 to 251 (TTPT…TWRF). N-linked (GlcNAc...) asparagine glycosylation is found at N43, N47, N73, and N153. Positions 263–283 (PAIQPADSPTSAARTERTGKG) are disordered. Residues 289–309 (VIVAIVIPIVFVALFAICLCL) traverse the membrane as a helical segment. Topologically, residues 310-683 (LLKWKKNKSV…DVTVSELSPR (374 aa)) are cytoplasmic. The 281-residue stretch at 361–641 (FSPENELGRG…ALMLNSYSYT (281 aa)) folds into the Protein kinase domain. ATP is bound by residues 367–375 (LGRGGFGSV) and K389. At Y434 the chain carries Phosphotyrosine. The active-site Proton acceptor is D486. S490 carries the post-translational modification Phosphoserine. T528 bears the Phosphothreonine mark. Y536 is modified (phosphotyrosine).

Belongs to the protein kinase superfamily. Ser/Thr protein kinase family. CRK subfamily.

It is found in the membrane. The enzyme catalyses L-seryl-[protein] + ATP = O-phospho-L-seryl-[protein] + ADP + H(+). It catalyses the reaction L-threonyl-[protein] + ATP = O-phospho-L-threonyl-[protein] + ADP + H(+). The sequence is that of Cysteine-rich receptor-like protein kinase 28 (CRK28) from Arabidopsis thaliana (Mouse-ear cress).